Here is a 298-residue protein sequence, read N- to C-terminus: Porphobilinogen deaminase (298 aa).

The residue at position 239 (Cys-239) is an S-(dipyrrolylmethanemethyl)cysteine.

It belongs to the HMBS family. As to quaternary structure, monomer. It depends on dipyrromethane as a cofactor.

It carries out the reaction 4 porphobilinogen + H2O = hydroxymethylbilane + 4 NH4(+). Its pathway is porphyrin-containing compound metabolism; protoporphyrin-IX biosynthesis; coproporphyrinogen-III from 5-aminolevulinate: step 2/4. Its function is as follows. Tetrapolymerization of the monopyrrole PBG into the hydroxymethylbilane pre-uroporphyrinogen in several discrete steps. The protein is Porphobilinogen deaminase of Orientia tsutsugamushi (strain Boryong) (Rickettsia tsutsugamushi).